A 496-amino-acid polypeptide reads, in one-letter code: Signal recognition particle subunit SRP54 1 (496 aa).

The tract at residues 1-296 (MVLAQLGGSI…DVKPFVSRLL (296 aa)) is G-domain. Residues 108–115 (GLQGSGKT), 191–195 (DTSGR), and 249–252 (TKMD) contribute to the GTP site. The interval 297 to 496 (GMGDLSGLVN…MGMFGGGGGE (200 aa)) is M-domain.

The protein belongs to the GTP-binding SRP family. SRP54 subfamily. As to quaternary structure, component of a signal recognition particle (SRP) complex that consists of a 7SL RNA molecule of 300 nucleotides and six protein subunits: SRP72, SRP68, SRP54, SRP19, SRP14 and SRP9.

It is found in the cytoplasm. Its subcellular location is the endoplasmic reticulum. It carries out the reaction GTP + H2O = GDP + phosphate + H(+). In terms of biological role, component of the signal recognition particle (SRP) complex, a ribonucleoprotein complex that mediates the cotranslational targeting of secretory and membrane proteins to the endoplasmic reticulum (ER). As part of the SRP complex, associates with the SRP receptor (SR) component SRPRA to target secretory proteins to the endoplasmic reticulum membrane. Binds to the signal sequence of presecretory proteins when they emerge from the ribosomes. Displays basal GTPase activity, and stimulates reciprocal GTPase activation of the SR subunit SRPRA. Forms a guanosine 5'-triphosphate (GTP)-dependent complex with the SR subunit SRPRA. SR compaction and GTPase mediated rearrangement of SR drive SRP-mediated cotranslational protein translocation into the ER. Requires the presence of SRP9/SRP14 and/or SRP19 to stably interact with RNA. This Solanum lycopersicum (Tomato) protein is Signal recognition particle subunit SRP54 1.